The sequence spans 376 residues: Queuine tRNA-ribosyltransferase (376 aa).

Asp89 acts as the Proton acceptor in catalysis. Residues 89–93, Asp143, Gln194, and Gly221 each bind substrate; that span reads DSGGF. The RNA binding stretch occupies residues 252 to 258; it reads GVGIPSN. The Nucleophile role is filled by Asp271. Residues 276 to 280 are RNA binding; important for wobble base 34 recognition; it reads ARNGR. Cys309, Cys311, Cys314, and His340 together coordinate Zn(2+).

The protein belongs to the queuine tRNA-ribosyltransferase family. Homodimer. Within each dimer, one monomer is responsible for RNA recognition and catalysis, while the other monomer binds to the replacement base PreQ1. Zn(2+) serves as cofactor.

The catalysed reaction is 7-aminomethyl-7-carbaguanine + guanosine(34) in tRNA = 7-aminomethyl-7-carbaguanosine(34) in tRNA + guanine. Its pathway is tRNA modification; tRNA-queuosine biosynthesis. Functionally, catalyzes the base-exchange of a guanine (G) residue with the queuine precursor 7-aminomethyl-7-deazaguanine (PreQ1) at position 34 (anticodon wobble position) in tRNAs with GU(N) anticodons (tRNA-Asp, -Asn, -His and -Tyr). Catalysis occurs through a double-displacement mechanism. The nucleophile active site attacks the C1' of nucleotide 34 to detach the guanine base from the RNA, forming a covalent enzyme-RNA intermediate. The proton acceptor active site deprotonates the incoming PreQ1, allowing a nucleophilic attack on the C1' of the ribose to form the product. After dissociation, two additional enzymatic reactions on the tRNA convert PreQ1 to queuine (Q), resulting in the hypermodified nucleoside queuosine (7-(((4,5-cis-dihydroxy-2-cyclopenten-1-yl)amino)methyl)-7-deazaguanosine). This chain is Queuine tRNA-ribosyltransferase, found in Clostridium botulinum (strain Kyoto / Type A2).